The primary structure comprises 397 residues: Succinyl-diaminopimelate desuccinylase (397 aa).

H73 contributes to the Zn(2+) binding site. Residue D75 is part of the active site. D106 is a binding site for Zn(2+). E140 serves as the catalytic Proton acceptor. Positions 141, 169, and 366 each coordinate Zn(2+).

This sequence belongs to the peptidase M20A family. DapE subfamily. As to quaternary structure, homodimer. It depends on Zn(2+) as a cofactor. Co(2+) is required as a cofactor.

It catalyses the reaction N-succinyl-(2S,6S)-2,6-diaminopimelate + H2O = (2S,6S)-2,6-diaminopimelate + succinate. Its pathway is amino-acid biosynthesis; L-lysine biosynthesis via DAP pathway; LL-2,6-diaminopimelate from (S)-tetrahydrodipicolinate (succinylase route): step 3/3. Its function is as follows. Catalyzes the hydrolysis of N-succinyl-L,L-diaminopimelic acid (SDAP), forming succinate and LL-2,6-diaminopimelate (DAP), an intermediate involved in the bacterial biosynthesis of lysine and meso-diaminopimelic acid, an essential component of bacterial cell walls. The chain is Succinyl-diaminopimelate desuccinylase from Rhizobium leguminosarum bv. trifolii (strain WSM2304).